We begin with the raw amino-acid sequence, 536 residues long: Inactive beta-amylase 9 (536 aa).

Ser-47 carries the post-translational modification Phosphoserine. The segment at 511–536 (QASEAEVEAETASIGSGTGAPSLQTA) is disordered.

It belongs to the glycosyl hydrolase 14 family. As to expression, mostly expressed in young floral buds, flowers and roots, and, to a later extent, in stems and leaves.

Its subcellular location is the cytoplasm. In Arabidopsis thaliana (Mouse-ear cress), this protein is Inactive beta-amylase 9 (BAM9).